The primary structure comprises 389 residues: Cytochrome b (389 aa).

Helical transmembrane passes span 36-56 (MGSL…FLAM), 80-102 (WLIR…THIA), 117-137 (VWTV…LGYC), and 183-203 (FFAF…MHMM). Positions 86 and 100 each coordinate heme b. Heme b is bound by residues histidine 187 and histidine 201. Histidine 206 provides a ligand contact to a ubiquinone. A run of 4 helical transmembrane segments spans residues 229–249 (FVFK…LFVF), 293–313 (LLGV…PITD), 325–345 (LSKF…IIGM), and 352–372 (FVLI…IIVP).

This sequence belongs to the cytochrome b family. Fungal cytochrome b-c1 complex contains 10 subunits; 3 respiratory subunits, 2 core proteins and 5 low-molecular weight proteins. Cytochrome b-c1 complex is a homodimer. The cofactor is heme b.

The protein resides in the mitochondrion inner membrane. In terms of biological role, component of the ubiquinol-cytochrome c reductase complex (complex III or cytochrome b-c1 complex) that is part of the mitochondrial respiratory chain. The b-c1 complex mediates electron transfer from ubiquinol to cytochrome c. Contributes to the generation of a proton gradient across the mitochondrial membrane that is then used for ATP synthesis. In Vanderwaltozyma polyspora (strain ATCC 22028 / DSM 70294 / BCRC 21397 / CBS 2163 / NBRC 10782 / NRRL Y-8283 / UCD 57-17) (Kluyveromyces polysporus), this protein is Cytochrome b (COB).